Reading from the N-terminus, the 403-residue chain is S-adenosylmethionine synthase (403 aa).

ATP is bound at residue H15. D17 is a Mg(2+) binding site. Residue E43 participates in K(+) binding. Residues E56 and Q99 each contribute to the L-methionine site. The tract at residues 99-109 (QSPDINQGVDR) is flexible loop. Residues 166–168 (DAK), 232–233 (KF), D241, 247–248 (RK), A264, and K268 each bind ATP. D241 contributes to the L-methionine binding site. K272 lines the L-methionine pocket.

The protein belongs to the AdoMet synthase family. As to quaternary structure, homotetramer; dimer of dimers. Mg(2+) is required as a cofactor. Requires K(+) as cofactor.

The protein localises to the cytoplasm. The enzyme catalyses L-methionine + ATP + H2O = S-adenosyl-L-methionine + phosphate + diphosphate. Its pathway is amino-acid biosynthesis; S-adenosyl-L-methionine biosynthesis; S-adenosyl-L-methionine from L-methionine: step 1/1. Functionally, catalyzes the formation of S-adenosylmethionine (AdoMet) from methionine and ATP. The overall synthetic reaction is composed of two sequential steps, AdoMet formation and the subsequent tripolyphosphate hydrolysis which occurs prior to release of AdoMet from the enzyme. The sequence is that of S-adenosylmethionine synthase from Xanthomonas axonopodis pv. citri (strain 306).